We begin with the raw amino-acid sequence, 239 residues long: ATP-dependent dethiobiotin synthetase BioD (239 aa).

22–27 (GIGKTV) contacts ATP. A Mg(2+)-binding site is contributed by T26. The active site involves K47. T51 is a substrate binding site. ATP contacts are provided by residues D59, 124–127 (EGVG), and 184–185 (NR). The Mg(2+) site is built by D59 and E124.

This sequence belongs to the dethiobiotin synthetase family. Homodimer. It depends on Mg(2+) as a cofactor.

It is found in the cytoplasm. The catalysed reaction is (7R,8S)-7,8-diammoniononanoate + CO2 + ATP = (4R,5S)-dethiobiotin + ADP + phosphate + 3 H(+). It participates in cofactor biosynthesis; biotin biosynthesis; biotin from 7,8-diaminononanoate: step 1/2. Catalyzes a mechanistically unusual reaction, the ATP-dependent insertion of CO2 between the N7 and N8 nitrogen atoms of 7,8-diaminopelargonic acid (DAPA, also called 7,8-diammoniononanoate) to form a ureido ring. This chain is ATP-dependent dethiobiotin synthetase BioD, found in Chlorobaculum tepidum (strain ATCC 49652 / DSM 12025 / NBRC 103806 / TLS) (Chlorobium tepidum).